The primary structure comprises 159 residues: S-ribosylhomocysteine lyase (159 aa).

H53, H57, and C124 together coordinate Fe cation.

This sequence belongs to the LuxS family. In terms of assembly, homodimer. It depends on Fe cation as a cofactor.

The enzyme catalyses S-(5-deoxy-D-ribos-5-yl)-L-homocysteine = (S)-4,5-dihydroxypentane-2,3-dione + L-homocysteine. Functionally, involved in the synthesis of autoinducer 2 (AI-2) which is secreted by bacteria and is used to communicate both the cell density and the metabolic potential of the environment. The regulation of gene expression in response to changes in cell density is called quorum sensing. Catalyzes the transformation of S-ribosylhomocysteine (RHC) to homocysteine (HC) and 4,5-dihydroxy-2,3-pentadione (DPD). This chain is S-ribosylhomocysteine lyase, found in Clostridium beijerinckii (strain ATCC 51743 / NCIMB 8052) (Clostridium acetobutylicum).